The primary structure comprises 264 residues: 3-methyl-2-oxobutanoate hydroxymethyltransferase (264 aa).

Mg(2+)-binding residues include D45 and D84. 3-methyl-2-oxobutanoate contacts are provided by residues 45–46 (DS), D84, and K112. E114 is a Mg(2+) binding site. The active-site Proton acceptor is the E181.

This sequence belongs to the PanB family. In terms of assembly, homodecamer; pentamer of dimers. It depends on Mg(2+) as a cofactor.

The protein resides in the cytoplasm. The enzyme catalyses 3-methyl-2-oxobutanoate + (6R)-5,10-methylene-5,6,7,8-tetrahydrofolate + H2O = 2-dehydropantoate + (6S)-5,6,7,8-tetrahydrofolate. It functions in the pathway cofactor biosynthesis; (R)-pantothenate biosynthesis; (R)-pantoate from 3-methyl-2-oxobutanoate: step 1/2. In terms of biological role, catalyzes the reversible reaction in which hydroxymethyl group from 5,10-methylenetetrahydrofolate is transferred onto alpha-ketoisovalerate to form ketopantoate. The sequence is that of 3-methyl-2-oxobutanoate hydroxymethyltransferase from Shewanella denitrificans (strain OS217 / ATCC BAA-1090 / DSM 15013).